Consider the following 244-residue polypeptide: 2-C-methyl-D-erythritol 4-phosphate cytidylyltransferase (244 aa).

This sequence belongs to the IspD/TarI cytidylyltransferase family. IspD subfamily.

It carries out the reaction 2-C-methyl-D-erythritol 4-phosphate + CTP + H(+) = 4-CDP-2-C-methyl-D-erythritol + diphosphate. It participates in isoprenoid biosynthesis; isopentenyl diphosphate biosynthesis via DXP pathway; isopentenyl diphosphate from 1-deoxy-D-xylulose 5-phosphate: step 2/6. Its function is as follows. Catalyzes the formation of 4-diphosphocytidyl-2-C-methyl-D-erythritol from CTP and 2-C-methyl-D-erythritol 4-phosphate (MEP). The chain is 2-C-methyl-D-erythritol 4-phosphate cytidylyltransferase from Solibacter usitatus (strain Ellin6076).